The chain runs to 161 residues: Large ribosomal subunit protein bL21m (161 aa).

The transit peptide at 1–35 directs the protein to the mitochondrion; it reads MLQLKFIWPVARITPIYRPFTSHPFRNLATSSSIS.

It belongs to the bacterial ribosomal protein bL21 family. As to quaternary structure, component of the mitochondrial large ribosomal subunit (mt-LSU). Mature yeast 74S mitochondrial ribosomes consist of a small (37S) and a large (54S) subunit. The 37S small subunit contains a 15S ribosomal RNA (15S mt-rRNA) and 34 different proteins. The 54S large subunit contains a 21S rRNA (21S mt-rRNA) and 46 different proteins.

It is found in the mitochondrion. Its function is as follows. Component of the mitochondrial ribosome (mitoribosome), a dedicated translation machinery responsible for the synthesis of mitochondrial genome-encoded proteins, including at least some of the essential transmembrane subunits of the mitochondrial respiratory chain. The mitoribosomes are attached to the mitochondrial inner membrane and translation products are cotranslationally integrated into the membrane. The protein is Large ribosomal subunit protein bL21m (MRPL49) of Saccharomyces cerevisiae (strain ATCC 204508 / S288c) (Baker's yeast).